A 488-amino-acid polypeptide reads, in one-letter code: UDP-N-acetylmuramate--L-alanine ligase (488 aa).

Position 127–133 (glycine 127–threonine 133) interacts with ATP.

Belongs to the MurCDEF family.

The protein resides in the cytoplasm. It carries out the reaction UDP-N-acetyl-alpha-D-muramate + L-alanine + ATP = UDP-N-acetyl-alpha-D-muramoyl-L-alanine + ADP + phosphate + H(+). Its pathway is cell wall biogenesis; peptidoglycan biosynthesis. In terms of biological role, cell wall formation. In Shewanella putrefaciens (strain CN-32 / ATCC BAA-453), this protein is UDP-N-acetylmuramate--L-alanine ligase.